The chain runs to 614 residues: Numb-like protein (614 aa).

5 disordered regions span residues 1 to 68 (MSRS…QWQA), 223 to 283 (GSFR…PVAA), 371 to 420 (FASA…LEEV), 448 to 468 (QQQQATSVPPMPTMAPTLQPF), and 539 to 614 (LGKA…EIEL). One can recognise a PID domain in the interval 74-223 (RKGTCSFPVR…ASRTSFAREG (150 aa)). 2 positions are modified to phosphoserine: Ser224 and Ser228. Residues 233-245 (PAEREAGDKKKAE) are compositionally biased toward basic and acidic residues. Residues 246–260 (AAAAPAVAPGPAQPG) are compositionally biased toward low complexity. Ser263 is modified (phosphoserine). Thr279 carries the phosphothreonine modification. The span at 371–390 (FASAGAPVPGPPSATTGTSA) shows a compositional bias: low complexity. Over residues 409–418 (TPSEAERWLE) the composition is skewed to basic and acidic residues. Phosphoserine is present on Ser411. The segment covering 563 to 578 (NGAPWPPEPAPAPAPE) has biased composition (pro residues).

In terms of assembly, associates with EPS15 and NOTCH1. Interacts (via PTB domain) with MAP3K7IP2 (via C-terminal). Interacts (via C-terminal) with TRAF6 (via TRAF domains).

It is found in the cytoplasm. Plays a role in the process of neurogenesis. Required throughout embryonic neurogenesis to maintain neural progenitor cells, also called radial glial cells (RGCs), by allowing their daughter cells to choose progenitor over neuronal cell fate. Not required for the proliferation of neural progenitor cells before the onset of embryonic neurogenesis. Also required postnatally in the subventricular zone (SVZ) neurogenesis by regulating SVZ neuroblasts survival and ependymal wall integrity. Negative regulator of NF-kappa-B signaling pathway. The inhibition of NF-kappa-B activation is mediated at least in part, by preventing MAP3K7IP2 to interact with polyubiquitin chains of TRAF6 and RIPK1 and by stimulating the 'Lys-48'-linked polyubiquitination and degradation of TRAF6 in cortical neurons. The polypeptide is Numb-like protein (Numbl) (Rattus norvegicus (Rat)).